The following is a 388-amino-acid chain: Ribosomal RNA large subunit methyltransferase F (388 aa).

Over residues methionine 1 to lysine 22 the composition is skewed to polar residues. Residues methionine 1–alanine 51 form a disordered region. Positions isoleucine 27 to proline 36 are enriched in basic residues.

It belongs to the methyltransferase superfamily. METTL16/RlmF family.

The protein localises to the cytoplasm. It catalyses the reaction adenosine(1618) in 23S rRNA + S-adenosyl-L-methionine = N(6)-methyladenosine(1618) in 23S rRNA + S-adenosyl-L-homocysteine + H(+). Its function is as follows. Specifically methylates the adenine in position 1618 of 23S rRNA. This is Ribosomal RNA large subunit methyltransferase F from Vibrio campbellii (strain ATCC BAA-1116).